We begin with the raw amino-acid sequence, 314 residues long: 2,3-dihydroxyphenylpropionate/2,3-dihydroxicinnamic acid 1,2-dioxygenase (314 aa).

His115 (proton donor) is an active-site residue. The Proton acceptor role is filled by His179.

The protein belongs to the LigB/MhpB extradiol dioxygenase family. As to quaternary structure, homotetramer. Fe(2+) serves as cofactor.

The enzyme catalyses 3-(2,3-dihydroxyphenyl)propanoate + O2 = (2Z,4E)-2-hydroxy-6-oxonona-2,4-dienedioate + H(+). It carries out the reaction (2E)-3-(2,3-dihydroxyphenyl)prop-2-enoate + O2 = (2Z,4E,7E)-2-hydroxy-6-oxonona-2,4,7-trienedioate + H(+). Its pathway is aromatic compound metabolism; 3-phenylpropanoate degradation. In terms of biological role, catalyzes the non-heme iron(II)-dependent oxidative cleavage of 2,3-dihydroxyphenylpropionic acid and 2,3-dihydroxicinnamic acid into 2-hydroxy-6-ketononadienedioate and 2-hydroxy-6-ketononatrienedioate, respectively. This chain is 2,3-dihydroxyphenylpropionate/2,3-dihydroxicinnamic acid 1,2-dioxygenase, found in Escherichia coli (strain 55989 / EAEC).